A 745-amino-acid polypeptide reads, in one-letter code: Probable xyloglucan glycosyltransferase 3 (745 aa).

The next 2 helical transmembrane spans lie at 116-136 (GFLL…LKGW) and 196-216 (IDYI…LFMV). D300 is a catalytic residue. Substrate is bound by residues D359 and D361. D453 is an active-site residue. The next 4 membrane-spanning stretches (helical) occupy residues 531-551 (LILP…TMFV), 556-576 (LPIW…ILPA), 695-715 (IFKK…RSLL), and 720-740 (LHFY…LDLI).

This sequence belongs to the glycosyltransferase 2 family. Plant cellulose synthase-like C subfamily.

The protein resides in the golgi apparatus membrane. Functionally, probable beta-1,4-glucan synthase rather involved in the synthesis of the xyloglucan backbone than cellulose. Seems to work simultaneously with xyloglucan 6-xylosyltransferase. Xyloglucan is a noncellulosic polysaccharides of plant cell wall and consists of a glucan backbone substituted by xylose, galactose and fucose. The chain is Probable xyloglucan glycosyltransferase 3 (CSLC3) from Oryza sativa subsp. japonica (Rice).